Reading from the N-terminus, the 258-residue chain is Pimeloyl-[acyl-carrier protein] methyl ester esterase (258 aa).

Residues 17–241 enclose the AB hydrolase-1 domain; the sequence is VYLIHGWGAN…KAAHAPFLSH (225 aa). Substrate-binding positions include Trp23, 83-84, and 145-149; these read SL and FLQLQ. The active-site Nucleophile is the Ser83. Residues Asp207 and His235 contribute to the active site. Position 235 (His235) interacts with substrate.

It belongs to the AB hydrolase superfamily. Carboxylesterase BioH family. As to quaternary structure, monomer.

It localises to the cytoplasm. It catalyses the reaction 6-carboxyhexanoyl-[ACP] methyl ester + H2O = 6-carboxyhexanoyl-[ACP] + methanol + H(+). It participates in cofactor biosynthesis; biotin biosynthesis. In terms of biological role, the physiological role of BioH is to remove the methyl group introduced by BioC when the pimeloyl moiety is complete. It allows to synthesize pimeloyl-ACP via the fatty acid synthetic pathway through the hydrolysis of the ester bonds of pimeloyl-ACP esters. The sequence is that of Pimeloyl-[acyl-carrier protein] methyl ester esterase from Neisseria meningitidis serogroup B (strain ATCC BAA-335 / MC58).